Consider the following 304-residue polypeptide: Non-structural maintenance of chromosomes element 3 homolog (304 aa).

Disordered stretches follow at residues 1–82 and 285–304; these read MLQK…PRSQ and ALAD…APSS. A compositionally biased stretch (basic and acidic residues) spans 32 to 43; that stretch reads AGEDARVLRDGF. A phosphoserine mark is found at Ser57, Ser60, and Ser64. The segment covering 60–80 has biased composition (low complexity); sequence SQGPSPQGARRAQAAPAVGPR. Positions 78–304 are interaction with NSMCE1; sequence GPRSQKQLEL…PQPSGPAPSS (227 aa). In terms of domain architecture, MAGE spans 85–285; sequence LELKVSELVQ…KDWPAQYCEA (201 aa).

As to quaternary structure, component of the SMC5-SMC6 complex which consists at least of SMC5, SMC6, NSMCE2, NSMCE1, NSMCE4A or EID3 and NSMCE3. NSMCE1, NSMCE4A or EID3 and NSMCE3 probably form a subcomplex that bridges the head domains of the SMC5:SMC6 heterodimer. Interacts with PJA1. Interacts with E2F1 (via C-terminus). Interacts with NGFR (via C-terminus). Interacts with NSMCE1. Interacts with NSMCE4. Interacts with SMC6. Interacts with EID3. In terms of tissue distribution, ubiquitous.

It localises to the cytoplasm. The protein localises to the nucleus. The protein resides in the chromosome. It is found in the telomere. Functionally, component of the SMC5-SMC6 complex, a complex involved in repair of DNA double-strand breaks by homologous recombination. The complex may promote sister chromatid homologous recombination by recruiting the SMC1-SMC3 cohesin complex to double-strand breaks. The complex is required for telomere maintenance via recombination in ALT (alternative lengthening of telomeres) cell lines and mediates sumoylation of shelterin complex (telosome) components which is proposed to lead to shelterin complex disassembly in ALT-associated PML bodies (APBs). In vitro enhances ubiquitin ligase activity of NSMCE1. Proposed to act through recruitment and/or stabilization of the Ubl-conjugating enzyme (E2) at the E3:substrate complex. May be a growth suppressor that facilitates the entry of the cell into cell cycle arrest. The polypeptide is Non-structural maintenance of chromosomes element 3 homolog (Homo sapiens (Human)).